The primary structure comprises 501 residues: MNRESFAAGERLVSPAYVRQGCEARRSHEHLIRLLLEKGKCPENGWDESTLELFLHELAIMDSNNFLGNCGVGEREGRVASALVARRHYRFIHGIGRSGDISAVQPKAAGSSLLNKITNSLVLDIIKLAGVHTVANCFVVPMATGMSLTLCFLTLRHKRPKAKYIIWPRIDQKSCFKSMITAGFEPVVIENVLEGDELRTDLKAVEAKVQELGPDCILCIHSTTSCFAPRVPDRLEELAVICANYDIPHIVNNAYGVQSSKCMHLIQQGARVGRIDAFVQSLDKNFMVPVGGAIIAGFNDSFIQEISKMYPGRASASPSLDVLITLLSLGSNGYKKLLKERKEMFSYLSNQIKKLSEAYNERLLHTPHNPISLAMTLKTLDEHRDKAVTQLGSMLFTRQVSGARVVPLGSMQTVSGYTFRGFMSHTNNYPCAYLNAASAIGMKMQDVDLFIKRLDRCLKAVRKERSKESDDNYDKTEDVDIEEMALKLDNVLLDTYQDASS.

Positions 1 to 44 are tetramerization; it reads MNRESFAAGERLVSPAYVRQGCEARRSHEHLIRLLLEKGKCPEN. S14 is subject to Phosphoserine. R75 is a binding site for pyridoxal 5'-phosphate. The segment at 96-106 is phosphate loop (P-loop); the sequence is GRSGDISAVQP. Positions 97, 98, and 105 each coordinate substrate. Residue R271 coordinates tRNA. Position 284 is an N6-(pyridoxal phosphate)lysine (K284). A substrate-binding site is contributed by R313. Residues R398 and K463 each coordinate tRNA. Residues 474 to 493 are SLA/LP epitope; sequence DKTEDVDIEEMALKLDNVLL.

The protein belongs to the SepSecS family. As to quaternary structure, homotetramer formed by a catalytic dimer and a non-catalytic dimer serving as a binding platform that orients tRNASec for catalysis. Each tetramer binds the CCA ends of two tRNAs which point to the active sites of the catalytic dimer. Requires pyridoxal 5'-phosphate as cofactor. As to expression, primarily expressed in liver, pancreas, kidney and lung. Overexpressed in PHA-stimulated T-cells.

The protein localises to the cytoplasm. It catalyses the reaction O-phospho-L-seryl-tRNA(Sec) + selenophosphate + H2O = L-selenocysteinyl-tRNA(Sec) + 2 phosphate. It functions in the pathway aminoacyl-tRNA biosynthesis; selenocysteinyl-tRNA(Sec) biosynthesis; selenocysteinyl-tRNA(Sec) from L-seryl-tRNA(Sec) (archaeal/eukaryal route): step 2/2. In terms of biological role, converts O-phosphoseryl-tRNA(Sec) to selenocysteinyl-tRNA(Sec) required for selenoprotein biosynthesis. The polypeptide is O-phosphoseryl-tRNA(Sec) selenium transferase (SEPSECS) (Homo sapiens (Human)).